The sequence spans 443 residues: MANDGNGDNNDDPLRQYLMNPRINPPPPSLLTLPENNDVTIPMPITPLELKNRLIFGSFVRSRKESSLPIDALSQNPSTSSSATTSFSDSTDLLLPLTEPNKPVRKSKPTINFHRSKTAPAMAAINNISHPNDPKTDQQSDSKTIVNQAVALLVVYLSLGVLIYWLNRDSYNVKQTHPVVDALYFCIVTMCTIGYGDITPDSVVTKLFSIFFVLVGFGFMDILLSGMVTYVLDLQENYMLETARNESLNLNDRDKVRSYIIDVKKGRMRIRLKVGLALGVVVLCLGFGVLIMHFVEKIGWLDSFYFSVMSVTTVGYGDRAFNTLAGRLLAAMWLLVSTLAVARAILFLAESRVDKRNRERAKKVLGESMSISQFLDADIDCNGCVSKAEFVIYKLKKMDKITEKDINPIGFQFDKLDRTNSGRITLLDLLESSTKDLPTATSI.

The Cytoplasmic portion of the chain corresponds to 1-144 (MANDGNGDNN…KTDQQSDSKT (144 aa)). The tract at residues 67–109 (SLPIDALSQNPSTSSSATTSFSDSTDLLLPLTEPNKPVRKSKP) is disordered. A compositionally biased stretch (low complexity) spans 72–98 (ALSQNPSTSSSATTSFSDSTDLLLPLT). Residues 145–165 (IVNQAVALLVVYLSLGVLIYW) traverse the membrane as a helical segment. The segment at residues 181 to 200 (DALYFCIVTMCTIGYGDITP) is an intramembrane region (pore-forming). The helical transmembrane segment at 208-228 (FSIFFVLVGFGFMDILLSGMV) threads the bilayer. The Cytoplasmic portion of the chain corresponds to 229–274 (TYVLDLQENYMLETARNESLNLNDRDKVRSYIIDVKKGRMRIRLKV). The helical transmembrane segment at 275–295 (GLALGVVVLCLGFGVLIMHFV) threads the bilayer. Residues 302–321 (DSFYFSVMSVTTVGYGDRAF) constitute an intramembrane region (pore-forming). Residues 328–348 (LLAAMWLLVSTLAVARAILFL) form a helical membrane-spanning segment. At 349-443 (AESRVDKRNR…TKDLPTATSI (95 aa)) the chain is on the cytoplasmic side. 2 consecutive EF-hand domains span residues 365 to 400 (LGESMSISQFLDADIDCNGCVSKAEFVIYKLKKMDK) and 404 to 439 (KDINPIGFQFDKLDRTNSGRITLLDLLESSTKDLPT). Ca(2+) is bound by residues D378, D380, N382, C384, E389, D417, S421, R423, and D428.

This sequence belongs to the two pore domain potassium channel (TC 1.A.1.7) family. In terms of assembly, homodimer. Expressed in roots, stems, leaves and flowers.

It is found in the vacuole membrane. Its function is as follows. Probable voltage-independent potassium-selective tonoplast ion channel. The protein is Two-pore potassium channel 2 (TPK2) of Arabidopsis thaliana (Mouse-ear cress).